Consider the following 176-residue polypeptide: Ribosome rescue factor SmrB (176 aa).

A Smr domain is found at 93–168 (LDLHGYRQSE…GDAALLVLID (76 aa)).

This sequence belongs to the SmrB family. In terms of assembly, associates with collided ribosomes, but not with correctly translating polysomes.

Acts as a ribosome collision sensor. Detects stalled/collided disomes (pairs of ribosomes where the leading ribosome is stalled and a second ribosome has collided with it) and endonucleolytically cleaves mRNA at the 5' boundary of the stalled ribosome. Stalled/collided disomes form a new interface (primarily via the 30S subunits) that binds SmrB. Cleaved mRNA becomes available for tmRNA ligation, leading to ribosomal subunit dissociation and rescue of stalled ribosomes. This chain is Ribosome rescue factor SmrB, found in Shewanella oneidensis (strain ATCC 700550 / JCM 31522 / CIP 106686 / LMG 19005 / NCIMB 14063 / MR-1).